The chain runs to 87 residues: Putative defensin-like protein 304 (87 aa).

The N-terminal stretch at 1 to 19 (MKSNKVTFFLGLFLVSAFC) is a signal peptide. 3 disulfides stabilise this stretch: Cys27–Cys46, Cys33–Cys51, and Cys40–Cys53.

It belongs to the DEFL family.

The protein resides in the secreted. This Arabidopsis thaliana (Mouse-ear cress) protein is Putative defensin-like protein 304.